Consider the following 564-residue polypeptide: MAAAVRPGAEPWNRVRIPQAGNCSTLTVRDPSATLDICTAAVTKGCHLVTQSLKSQTLDAEVDVLCSVLYSNHNRLGHHKPHLALRQVEQCLKRLKHMNLEGSIEDLSQLLSANATQPGATENRVVPSQPVVEVVLMKVLGGCKLLLRLLDCCCKAFLLTVKHLGLKEFIILNLVMVGLVSRLWVLHKGLLRRLISLYEPLLSLRQEISSIHPMPYFKDFAFPSDITDFLGPSYLEVFKVKTPAASATKGVTKLLNKLFLMREQLPKMNEDTLDRLSKPSEQMTSNPQSTVDLGQPVKACKRTRKEKPLGFDLRAFCTRLGNKATQETNRDFKYSQSKLKTTKLPSQQLRTHWANDTVQRIRKTKTFAQLSEEIEMAIVWSRSKKLKTQATFLGNKLLKSNRFRHVESQGYSLTKKLQCMKTSLCNCLLRGSRTSTSEHPPRQRRSKYKVLSRQRKPQRKLQSTLLKETQQVPEGTLKNTRDSSAKRRCSGTVQRSDVCPNGKQVLRKLAKPDLKTKVVVHGNLTGGSRNESGFQAKTQMHTHNAPDTAKEADDIDDIFALMGV.

A disordered region spans residues 431 to 495; that stretch reads GSRTSTSEHP…KRRCSGTVQR (65 aa). The span at 442–459 shows a compositional bias: basic residues; that stretch reads RQRRSKYKVLSRQRKPQR. The interval 442–460 is nuclear localization signal; it reads RQRRSKYKVLSRQRKPQRK. The span at 460–473 shows a compositional bias: polar residues; that stretch reads KLQSTLLKETQQVP.

It belongs to the nepro family.

It is found in the nucleus. Its subcellular location is the nucleolus. Its function is as follows. May play a role in cortex development as part of the Notch signaling pathway. Downstream of Notch may repress the expression of proneural genes and inhibit neuronal differentiation thereby maintaining neural progenitors. May also play a role in preimplentation embryo development. The polypeptide is Nucleolus and neural progenitor protein (Mus musculus (Mouse)).